Here is a 253-residue protein sequence, read N- to C-terminus: MTVHFIGAGPGAADLITVRGRDLIGRCPVCLYAGSIVSPELLRYCPPGARIVDTAPMSLDEIEAEYVKAEAEGLDVARLHSGDLSVWSAVAEQIRRLEKHGIAYTMTPGVPSFAAAASALGRELTIPAVAQSLVLTRVSGRASPMPNSETLSAFGATGSTLAIHLAIHALQQVVEELTPLYGADCPVAIVVKASWPDERVVRGTLGDIAAKVAEEPIERTALIFVGPGLEASDFRESSLYDPAYQRRFRGRGE.

It belongs to the precorrin methyltransferase family.

The enzyme catalyses precorrin-4 + S-adenosyl-L-methionine = precorrin-5 + S-adenosyl-L-homocysteine. It functions in the pathway cofactor biosynthesis; adenosylcobalamin biosynthesis; cob(II)yrinate a,c-diamide from precorrin-2 (aerobic route): step 4/10. Its function is as follows. Catalyzes the methylation of C-11 in precorrin-4 to form precorrin-5. The protein is Precorrin-4 C(11)-methyltransferase (cobM) of Sinorhizobium sp.